Reading from the N-terminus, the 225-residue chain is Small ribosomal subunit protein uS3 (225 aa).

Positions leucine 38–arginine 106 constitute a KH type-2 domain.

This sequence belongs to the universal ribosomal protein uS3 family. As to quaternary structure, part of the 30S ribosomal subunit. Forms a tight complex with proteins S10 and S14.

Its function is as follows. Binds the lower part of the 30S subunit head. Binds mRNA in the 70S ribosome, positioning it for translation. The sequence is that of Small ribosomal subunit protein uS3 from Gluconobacter oxydans (strain 621H) (Gluconobacter suboxydans).